The following is a 58-amino-acid chain: Cyclotide trypsin inhibitor TopI1 (58 aa).

Positions Met-1 to Gly-23 are cleaved as a signal peptide. Residues Ile-24–Lys-55 constitute a cross-link (cyclopeptide (Ile-Lys)). 3 disulfides stabilise this stretch: Cys-28-Cys-45, Cys-34-Cys-50, and Cys-38-Cys-52. Ser-56 carries the post-translational modification Serine amide.

In terms of processing, this is a cyclic peptide. Expressed by the venom gland.

It localises to the secreted. Its function is as follows. First cyclic scorpion trypsin inhibitor (Kd~0.5 nM). Does not inhibit chymotrypsin. This is Cyclotide trypsin inhibitor TopI1 from Tityus obscurus (Amazonian scorpion).